The primary structure comprises 858 residues: DNA mismatch repair protein MutS (858 aa).

ATP is bound at residue 600 to 607 (GPNMSGKS).

Belongs to the DNA mismatch repair MutS family.

Functionally, this protein is involved in the repair of mismatches in DNA. It is possible that it carries out the mismatch recognition step. This protein has a weak ATPase activity. This Bacillus pumilus (strain SAFR-032) protein is DNA mismatch repair protein MutS.